Here is a 969-residue protein sequence, read N- to C-terminus: Putative zinc protease mug138 (969 aa).

Residue histidine 68 coordinates Zn(2+). The active-site Proton acceptor is glutamate 71. 2 residues coordinate Zn(2+): histidine 72 and glutamate 149.

It belongs to the peptidase M16 family.

The protein resides in the cytoplasm. Functionally, has a role in meiosis. This is Putative zinc protease mug138 (mug138) from Schizosaccharomyces pombe (strain 972 / ATCC 24843) (Fission yeast).